A 507-amino-acid polypeptide reads, in one-letter code: Blue light receptor lreB (507 aa).

The 65-residue stretch at 170–234 (RVLNEMKDML…EEMNECITTT (65 aa)) folds into the PAS domain. A GATA-type zinc finger spans residues 463–488 (CTDCGTSDSPEWRKGPEGPKTLCNAC).

Functionally, probable transcription factor involved in light regulation. Plays crucial roles in fungal growth and asexual development. Involved in conidiophore formation, sclerotium production, and conidial stress tolerance. Positively regulates the fungal pathogenicity towards maize and aflatoxin B1 production. This is Blue light receptor lreB from Aspergillus flavus.